The chain runs to 63 residues: Large ribosomal subunit protein bL32 (63 aa).

This sequence belongs to the bacterial ribosomal protein bL32 family.

In Lactobacillus delbrueckii subsp. bulgaricus (strain ATCC 11842 / DSM 20081 / BCRC 10696 / JCM 1002 / NBRC 13953 / NCIMB 11778 / NCTC 12712 / WDCM 00102 / Lb 14), this protein is Large ribosomal subunit protein bL32.